The following is a 404-amino-acid chain: Activity-regulated cytoskeleton-associated protein (404 aa).

The stretch at 51–78 forms a coiled coil; the sequence is EVSKQVERELKGLQKSVGKLENNLEDHV. A disordered region spans residues 351–404; sequence VQGNMDHSEEPSPQRTPEIQSGDSVESMPPSTTASPVPSNGTQPEPPSPPATVI. Residues 363–393 show a composition bias toward polar residues; the sequence is PQRTPEIQSGDSVESMPPSTTASPVPSNGTQ. Positions 394–404 are enriched in pro residues; sequence PEPPSPPATVI.

It belongs to the ARC/ARG3.1 family. Homooligomer; homooligomerizes into virion-like capsids. In terms of processing, palmitoylation anchors the protein into the membrane by allowing direct insertion into the hydrophobic core of the lipid bilayer. Expressed at various levels throughout the brain.

It is found in the extracellular vesicle membrane. It localises to the postsynaptic cell membrane. Its subcellular location is the synapse. The protein localises to the postsynaptic density. The protein resides in the early endosome membrane. It is found in the cell projection. It localises to the dendrite. Its subcellular location is the cytoplasm. The protein localises to the cytoskeleton. The protein resides in the cell cortex. It is found in the dendritic spine. Master regulator of synaptic plasticity that self-assembles into virion-like capsids that encapsulate RNAs and mediate intercellular RNA transfer in the nervous system. ARC protein is released from neurons in extracellular vesicles that mediate the transfer of ARC mRNA into new target cells, where ARC mRNA can undergo activity-dependent translation. ARC capsids are endocytosed and are able to transfer ARC mRNA into the cytoplasm of neurons. Acts as a key regulator of synaptic plasticity: required for protein synthesis-dependent forms of long-term potentiation (LTP) and depression (LTD) and for the formation of long-term memory. Regulates synaptic plasticity by promoting endocytosis of AMPA receptors (AMPARs) in response to synaptic activity: this endocytic pathway maintains levels of surface AMPARs in response to chronic changes in neuronal activity through synaptic scaling, thereby contributing to neuronal homeostasis. Acts as a postsynaptic mediator of activity-dependent synapse elimination in the developing cerebellum by mediating elimination of surplus climbing fiber synapses. Accumulates at weaker synapses, probably to prevent their undesired enhancement. This suggests that ARC-containing virion-like capsids may be required to eliminate synaptic material. This Gallus gallus (Chicken) protein is Activity-regulated cytoskeleton-associated protein.